A 313-amino-acid polypeptide reads, in one-letter code: Ribosomal RNA small subunit methyltransferase H (313 aa).

S-adenosyl-L-methionine contacts are provided by residues Gly35–His37, Asp55, Phe80, Asp102, and Gln109.

This sequence belongs to the methyltransferase superfamily. RsmH family.

The protein resides in the cytoplasm. It catalyses the reaction cytidine(1402) in 16S rRNA + S-adenosyl-L-methionine = N(4)-methylcytidine(1402) in 16S rRNA + S-adenosyl-L-homocysteine + H(+). In terms of biological role, specifically methylates the N4 position of cytidine in position 1402 (C1402) of 16S rRNA. The protein is Ribosomal RNA small subunit methyltransferase H of Shewanella amazonensis (strain ATCC BAA-1098 / SB2B).